The primary structure comprises 316 residues: Pentatricopeptide repeat-containing protein At1g19525 (316 aa).

PPR repeat units lie at residues 9-43 (DILT…GLRP), 44-78 (DEKI…ELKA), 79-113 (SEEV…SDGP), 115-149 (SFEA…GHKP), 150-184 (DDKC…GIEI), and 185-219 (GVIT…GEAP).

This sequence belongs to the PPR family. P subfamily.

The sequence is that of Pentatricopeptide repeat-containing protein At1g19525 from Arabidopsis thaliana (Mouse-ear cress).